A 227-amino-acid chain; its full sequence is MKHAEIPPPPDAAAEVFGPALGAARRYAEILAGAGVERGLLGPREVDRIWDRHILNCAVIGELVEAGERVADVGSGAGLPGIPLALARPDVHVVLIEPLLRRSDFLREAIEDVGIECSVVRGRAEDRSVREEVGPTDVVVSRAVASLDKLAKWSSPLLRPGGRMLAIKGERAAEEIEEHRRALAALGVSELKVERCGARFVDPPATVVVGFQATAPEKRPRSGRRQR.

S-adenosyl-L-methionine-binding positions include glycine 74, leucine 79, 124–125 (AE), and arginine 142.

It belongs to the methyltransferase superfamily. RNA methyltransferase RsmG family.

The protein resides in the cytoplasm. Functionally, specifically methylates the N7 position of guanine in position 518 of 16S rRNA. The protein is Ribosomal RNA small subunit methyltransferase G of Mycolicibacterium gilvum (strain PYR-GCK) (Mycobacterium gilvum (strain PYR-GCK)).